The sequence spans 30 residues: Conotoxin Bt12.1 (30 aa).

In terms of processing, contains 3 disulfide bonds. As to expression, expressed by the venom duct.

It is found in the secreted. The chain is Conotoxin Bt12.1 from Conus betulinus (Beech cone).